Here is a 132-residue protein sequence, read N- to C-terminus: D-ribose pyranase (132 aa).

His-20 acts as the Proton donor in catalysis. Residues Asp-28, His-99, and 121–123 (YSN) each bind substrate.

The protein belongs to the RbsD / FucU family. RbsD subfamily. In terms of assembly, homodecamer.

The protein localises to the cytoplasm. The catalysed reaction is beta-D-ribopyranose = beta-D-ribofuranose. It participates in carbohydrate metabolism; D-ribose degradation; D-ribose 5-phosphate from beta-D-ribopyranose: step 1/2. Catalyzes the interconversion of beta-pyran and beta-furan forms of D-ribose. The polypeptide is D-ribose pyranase (Lactococcus lactis subsp. cremoris (strain SK11)).